The primary structure comprises 934 residues: Translation initiation factor IF-2 (934 aa).

Positions 54–323 (AQESKPTTPP…KRQKRNEYEA (270 aa)) are disordered. Composition is skewed to low complexity over residues 80–154 (PKPG…AGKP), 185–197 (RGGATPGDMPRPG), 206–231 (GQAPRPGARPAQGQGRGQGTAKPGAA), and 238–250 (RPSPAMMPATPSP). Residues 260–303 (GFGGGRGRGGRPGGPGGPGGPGGPGPRGGRGGRRGGTAGAFGRP) show a composition bias toward gly residues. The segment covering 308–317 (RRGRKSKRQK) has biased composition (basic residues). The tr-type G domain maps to 430–602 (QRPPVVTVMG…VLLTADASLD (173 aa)). The interval 439–446 (GHVDHGKT) is G1. 439–446 (GHVDHGKT) lines the GTP pocket. Residues 464 to 468 (GITQH) form a G2 region. Positions 489–492 (DTPG) are G3. GTP contacts are provided by residues 489–493 (DTPGH) and 543–546 (NKID). Residues 543–546 (NKID) form a G4 region. A G5 region spans residues 579–581 (SAK).

It belongs to the TRAFAC class translation factor GTPase superfamily. Classic translation factor GTPase family. IF-2 subfamily.

It is found in the cytoplasm. One of the essential components for the initiation of protein synthesis. Protects formylmethionyl-tRNA from spontaneous hydrolysis and promotes its binding to the 30S ribosomal subunits. Also involved in the hydrolysis of GTP during the formation of the 70S ribosomal complex. This Corynebacterium urealyticum (strain ATCC 43042 / DSM 7109) protein is Translation initiation factor IF-2.